Consider the following 90-residue polypeptide: DNA-directed RNA polymerase subunit omega (90 aa).

Belongs to the RNA polymerase subunit omega family. In terms of assembly, the RNAP catalytic core consists of 2 alpha, 1 beta, 1 beta' and 1 omega subunit. When a sigma factor is associated with the core the holoenzyme is formed, which can initiate transcription.

It carries out the reaction RNA(n) + a ribonucleoside 5'-triphosphate = RNA(n+1) + diphosphate. Its function is as follows. Promotes RNA polymerase assembly. Latches the N- and C-terminal regions of the beta' subunit thereby facilitating its interaction with the beta and alpha subunits. This is DNA-directed RNA polymerase subunit omega from Beutenbergia cavernae (strain ATCC BAA-8 / DSM 12333 / CCUG 43141 / JCM 11478 / NBRC 16432 / NCIMB 13614 / HKI 0122).